A 400-amino-acid polypeptide reads, in one-letter code: Subtilisin-like protease CPC735_047380 (400 aa).

The first 19 residues, 1–19 (MARINVVVSFLAALAVVQA), serve as a signal peptide directing secretion. The propeptide occupies 20-118 (AQLLNLDGQK…IEPQRTFRAF (99 aa)). In terms of domain architecture, Inhibitor I9 spans 35-116 (SYVVVMNDGL…NYIEPQRTFR (82 aa)). The Peptidase S8 domain occupies 128 to 400 (SWGLGRISHT…DKLLYNGSGQ (273 aa)). Asn-153 carries N-linked (GlcNAc...) asparagine glycosylation. Catalysis depends on charge relay system residues Asp-160 and His-191. Residues Asn-244 and Asn-252 are each glycosylated (N-linked (GlcNAc...) asparagine). Ser-346 acts as the Charge relay system in catalysis. N-linked (GlcNAc...) asparagine glycosylation is present at Asn-396.

It belongs to the peptidase S8 family.

The protein localises to the secreted. Functionally, secreted subtilisin-like serine protease with keratinolytic activity that contributes to pathogenicity. This Coccidioides posadasii (strain C735) (Valley fever fungus) protein is Subtilisin-like protease CPC735_047380.